Here is a 313-residue protein sequence, read N- to C-terminus: Ribosomal protein L11 methyltransferase (313 aa).

The S-adenosyl-L-methionine site is built by Thr164, Gly185, Asp207, and Asn249.

Belongs to the methyltransferase superfamily. PrmA family.

Its subcellular location is the cytoplasm. It catalyses the reaction L-lysyl-[protein] + 3 S-adenosyl-L-methionine = N(6),N(6),N(6)-trimethyl-L-lysyl-[protein] + 3 S-adenosyl-L-homocysteine + 3 H(+). Methylates ribosomal protein L11. The chain is Ribosomal protein L11 methyltransferase from Clostridium perfringens (strain 13 / Type A).